The primary structure comprises 145 residues: Transcription antitermination protein NusB (145 aa).

Belongs to the NusB family.

In terms of biological role, involved in transcription antitermination. Required for transcription of ribosomal RNA (rRNA) genes. Binds specifically to the boxA antiterminator sequence of the ribosomal RNA (rrn) operons. The chain is Transcription antitermination protein NusB from Paraburkholderia phymatum (strain DSM 17167 / CIP 108236 / LMG 21445 / STM815) (Burkholderia phymatum).